Here is a 630-residue protein sequence, read N- to C-terminus: Putative F-box/LRR-repeat protein At3g49150 (630 aa).

The F-box domain occupies 15-63 (KDIISDLPEALICHILSFLPIEDSALTSVLSKKWQHLFAFRPNLEFDDA). 9 LRR repeats span residues 101–129 (CRDFTDPTCVSRWISNVMERGVSDLDLRC), 152–178 (RIETGNGAFIDVEDVFLPNLKTLYLNK), 180–205 (LLRHSDNGFVKLITSCHVLEDLFIMN), 228–253 (CEDVHAVNPESVSFDTPNLVYFVYHD), 300–325 (ISNVQILELFANTIEVLTFCCEQIPV), 337–362 (DQKAGWESLPVLLKNCPDLESLIFDG), 406–436 (CDDYDDMEKQIELVMYFLETMPNLEEMKLFY), 437–465 (DTQIYEDVISKLQMDLRRTLSLRSLFNAR), and 567–590 (DSSIQLDFVQQIVHNVHSLTGLNW).

The protein is Putative F-box/LRR-repeat protein At3g49150 of Arabidopsis thaliana (Mouse-ear cress).